A 99-amino-acid polypeptide reads, in one-letter code: NADH-quinone oxidoreductase subunit K (99 aa).

A run of 3 helical transmembrane segments spans residues 2-22, 28-48, and 60-80; these read PVEY…LGVL, LILM…FLAF, and IAFF…AVVI.

This sequence belongs to the complex I subunit 4L family. As to quaternary structure, NDH-1 is composed of 14 different subunits. Subunits NuoA, H, J, K, L, M, N constitute the membrane sector of the complex.

It is found in the cell inner membrane. It carries out the reaction a quinone + NADH + 5 H(+)(in) = a quinol + NAD(+) + 4 H(+)(out). In terms of biological role, NDH-1 shuttles electrons from NADH, via FMN and iron-sulfur (Fe-S) centers, to quinones in the respiratory chain. The immediate electron acceptor for the enzyme in this species is believed to be ubiquinone. Couples the redox reaction to proton translocation (for every two electrons transferred, four hydrogen ions are translocated across the cytoplasmic membrane), and thus conserves the redox energy in a proton gradient. This chain is NADH-quinone oxidoreductase subunit K, found in Anaeromyxobacter dehalogenans (strain 2CP-C).